Consider the following 393-residue polypeptide: MSLRIGMVAGEPSGDLLAGRIIAGLQARAPGVHCAGIGGPQMAARGFEAWHPMHALTVFGYIDAFKRIPSLLSTYGDVKRRLLAEPPSVFVGIDAPDFNLRLEHQLRQAGTPTVHFVGPSIWAWRYERINKIRAAVSHMLVLFPFEEALYRKEGIPVTYVGHPLAGVIPMQPDRAAARARLGIDADARVLAILPGSRSSEIRLLAPRFLQAAAELVRRDPRLQCVVPMVNPQRRAEFEAIATQHPVPGLRCVTAAEGQGETPVAWSVMEASNAVLVASGTATLETALYKRPMVISYVLSPWMRRIMAWKSGQQRPYLPWVGLPNVLLRDFAVPELLQDEATPAALAEATWQALTDEAGAARIEARFTALHQDLLRDTPALAAQAILEVADGAA.

The protein belongs to the LpxB family.

It catalyses the reaction a lipid X + a UDP-2-N,3-O-bis[(3R)-3-hydroxyacyl]-alpha-D-glucosamine = a lipid A disaccharide + UDP + H(+). It participates in bacterial outer membrane biogenesis; LPS lipid A biosynthesis. Its function is as follows. Condensation of UDP-2,3-diacylglucosamine and 2,3-diacylglucosamine-1-phosphate to form lipid A disaccharide, a precursor of lipid A, a phosphorylated glycolipid that anchors the lipopolysaccharide to the outer membrane of the cell. The chain is Lipid-A-disaccharide synthase from Bordetella pertussis (strain Tohama I / ATCC BAA-589 / NCTC 13251).